The chain runs to 122 residues: Modulator protein MzrA (122 aa).

The Cytoplasmic portion of the chain corresponds to 1-10; it reads MKILTRIPRR. A helical membrane pass occupies residues 11–31; it reads LLPWLLGGALALVAVSFAPAL. At 32–122 the chain is on the periplasmic side; that stretch reads LSHETVVQIR…NQDANRSIYS (91 aa).

This sequence belongs to the MzrA family. In terms of assembly, interacts with EnvZ.

It localises to the cell inner membrane. In terms of biological role, modulates the activity of the EnvZ/OmpR two-component regulatory system, probably by directly modulating EnvZ enzymatic activity and increasing stability of phosphorylated OmpR. This is Modulator protein MzrA from Pantoea sp. (strain At-9b).